Consider the following 165-residue polypeptide: Pro-MCH (165 aa).

The first 21 residues, 1–21, serve as a signal peptide directing secretion; that stretch reads MAKMSLSSYLLILTFSLFSQG. Positions 68 to 88 are disordered; sequence NDDSSFMNDEENKNSKNTGSK. Ile143 is modified (isoleucine amide). Cys153 and Cys162 form a disulfide bridge.

The protein belongs to the melanin-concentrating hormone family. In terms of processing, pro-MCH is processed differentially in the brain and in peripheral organs producing two neuropeptides; NEI and MCH. A third peptide, NGE, may also be produced. Preferential processing in neurons by prohormone convertase 2 (PC2) generates NEI. MCH is generated in neurons of the lateral hypothalmic area by several prohormone convertases including PC1/3, PC2 and PC5/6.

The protein resides in the secreted. MCH may act as a neurotransmitter or neuromodulator in a broad array of neuronal functions directed toward the regulation of goal-directed behavior, such as food intake, and general arousal. This Canis lupus familiaris (Dog) protein is Pro-MCH (PMCH).